The sequence spans 420 residues: Tyrosine-protein phosphatase non-receptor type 20 (420 aa).

A compositionally biased stretch (basic and acidic residues) spans 1–11 (MSSPRDFRAEP). 2 disordered regions span residues 1–47 (MSSP…VFEN) and 68–108 (DVFE…SQAL). Positions 31–41 (LPSSSQENTPR) are enriched in polar residues. A phosphoserine mark is found at serine 76 and serine 120. The 254-residue stretch at 159-412 (IMQEFMALEL…HFCYDIVLEV (254 aa)) folds into the Tyrosine-protein phosphatase domain. Substrate-binding positions include aspartate 323, 353-359 (CSAGIGR), and glutamine 397. Cysteine 353 (phosphocysteine intermediate) is an active-site residue.

This sequence belongs to the protein-tyrosine phosphatase family. Non-receptor class subfamily. In terms of tissue distribution, present in many cell lines (at protein level). Widely expressed.

It is found in the nucleus. The protein localises to the cytoplasm. Its subcellular location is the cytoskeleton. It localises to the microtubule organizing center. The protein resides in the centrosome. It catalyses the reaction O-phospho-L-tyrosyl-[protein] + H2O = L-tyrosyl-[protein] + phosphate. Functionally, tyrosine-protein phosphatase targeted to sites of actin polymerization in response of varied extracellular stimuli. Has tyrosine phosphatase activity towards various tyrosyl phosphorylated substrates. This is Tyrosine-protein phosphatase non-receptor type 20 from Homo sapiens (Human).